The chain runs to 144 residues: uncharacterized protein (144 aa).

The region spanning 2–144 (IELDAINPNN…EDSVLLSKKL (143 aa)) is the N-acetyltransferase domain.

The protein belongs to the acetyltransferase family.

It localises to the cytoplasm. The protein localises to the nucleus. This is an uncharacterized protein from Schizosaccharomyces pombe (strain 972 / ATCC 24843) (Fission yeast).